Consider the following 71-residue polypeptide: Large ribosomal subunit protein bL31 (71 aa).

Residues C16, C18, C37, and C40 each contribute to the Zn(2+) site.

The protein belongs to the bacterial ribosomal protein bL31 family. Type A subfamily. As to quaternary structure, part of the 50S ribosomal subunit. It depends on Zn(2+) as a cofactor.

Its function is as follows. Binds the 23S rRNA. In Nitratidesulfovibrio vulgaris (strain DSM 19637 / Miyazaki F) (Desulfovibrio vulgaris), this protein is Large ribosomal subunit protein bL31.